Here is a 73-residue protein sequence, read N- to C-terminus: Gene 30 protein (73 aa).

An HTH cro/C1-type domain is found at 12 to 66 (LEKAINAVGGSQKVLAEKVGVTPQAINMLKKRGGSLPVTKMRKYEEVTGLPREVL). Residues 23-42 (QKVLAEKVGVTPQAINMLKK) constitute a DNA-binding region (H-T-H motif).

This Escherichia coli (Bacteriophage phi-80) protein is Gene 30 protein (30).